Here is a 554-residue protein sequence, read N- to C-terminus: MSEKYHSTVTRRDFMKRLGLAGAGAGALGAAVLAENNLPHEFKDVDDLLSAGKALEGDHANKVNNHPWWVTTRDHEDPTCNIDWSLIKRYSGWNNQGAYFLPEDYLSPTYTGRRHTIVDSKLEIELQGKKYRDSAFIKSGIDWMKENIDPDYDPGELGYGDRREDALIYAATNGSHNCWENPLYGRYEGSRPYLSMRTMNGINGLHEFGHADIKTTNYPKWEGTPEENLLIMRTAARYFGASSVGAIKITDNVKKIFYAKVQPFCLGPWYTITNMAEYIEYPVPVDNYAIPIVFEDIPADQGHYSYKRFGGDDKIAVPNALDNIFTYTIMLPEKRFKYAHSIPMDPCSCIAYPLFTEVEARIQQFIAGLGYNSMGGGVEAWGPGSAFGNLSGLGEQSRVSSIIEPRYGSNTKGSLRMLTDLPLAPTKPIDAGIREFCKTCGICAEHCPTQAISHEGPRYDSPHWDCVSGYEGWHLDYHKCINCTICEAVCPFFTMSNNSWVHNLVKSTVATTPVFNGFFKNMEGAFGYGPRYSPSRDEWWASENPIRGASVDIF.

Residues M1–F42 constitute a signal peptide (tat-type signal). 2 4Fe-4S ferredoxin-type domains span residues P425–P457 and E471–W500. C437, C440, C443, C447, C480, C483, C486, and C490 together coordinate [4Fe-4S] cluster.

The protein belongs to the PceA family. The cofactor is [4Fe-4S] cluster. Corrinoid serves as cofactor. In terms of processing, predicted to be exported by the Tat system. The position of the signal peptide cleavage has been experimentally proven.

It localises to the cell membrane. It carries out the reaction trichloroethene + AH2 = (Z)-1,2-dichloroethene + chloride + A + H(+). It catalyses the reaction (Z)-1,2-dichloroethene + AH2 = chloroethene + chloride + A + H(+). The catalysed reaction is 1,1-dichloroethene + AH2 = chloroethene + chloride + A + H(+). Loses 93% of its activity upon incubation with 1-iodopropane and titanium(III) citrate in the dark. Subsequent exposure to light restores 80% of the original activity. Completely inhibited by 2 mM sodium sulfite or sodium dithionite, and by 1 mM cuprous chloride. Functionally, catalyzes the reductive dechlorination of trichloroethene (TCE) to cis-1,2-dichloroethene (DCE) and of cis-1,2-dichloroethene to chloroethene. The substrate specificity is broad, and the enzyme can dehalogenate various substrates, including 1,1-dichloroethene (1,1-DCE), 1,2-dichloroethane and 1,2-dibromoethane. A variety of other haloalkanes and haloalkenes containing three to five carbon atoms are dehalogenated at lower rates. Trans-1,2-dichloroethene (trans-DCE) and chloroethene are degraded at rates which are approximately 2 orders of magnitude lower. Titanium(III) citrate and methyl viologen can be used as reductants. This is Trichloroethene reductive dehalogenase from Dehalococcoides mccartyi (strain ATCC BAA-2266 / KCTC 15142 / 195) (Dehalococcoides ethenogenes (strain 195)).